The primary structure comprises 100 residues: NADH-quinone oxidoreductase subunit K 2 (100 aa).

Transmembrane regions (helical) follow at residues Leu4–Leu24, Ile28–Ala48, and Ile60–Leu80.

Belongs to the complex I subunit 4L family. In terms of assembly, NDH-1 is composed of 14 different subunits. Subunits NuoA, H, J, K, L, M, N constitute the membrane sector of the complex.

It is found in the cell inner membrane. The enzyme catalyses a quinone + NADH + 5 H(+)(in) = a quinol + NAD(+) + 4 H(+)(out). NDH-1 shuttles electrons from NADH, via FMN and iron-sulfur (Fe-S) centers, to quinones in the respiratory chain. The immediate electron acceptor for the enzyme in this species is believed to be ubiquinone. Couples the redox reaction to proton translocation (for every two electrons transferred, four hydrogen ions are translocated across the cytoplasmic membrane), and thus conserves the redox energy in a proton gradient. The polypeptide is NADH-quinone oxidoreductase subunit K 2 (Rhizobium etli (strain CIAT 652)).